A 204-amino-acid chain; its full sequence is MDRVVLMLSVMSLGVSSQPITDGQRLFSIAVSRVQHLHLLAQRLFSDFESSLQTEEQRQLNKIFLQDFCNSDYIISPIDKHETQRSSVLKLLSISYRLVESWEFPSRSLSGGSAPRNQISPKLSELKTGIHLLIRANEDGAEIFPDSSALQLAPYGNYYQSLGTDESLRRTYELLACFKKDMHKVETYLTVAKCRLSPEANCTL.

The first 17 residues, 1–17, serve as a signal peptide directing secretion; the sequence is MDRVVLMLSVMSLGVSS. Glutamine 18 bears the Pyrrolidone carboxylic acid mark. Histidine 36 is a Zn(2+) binding site. An intrachain disulfide couples cysteine 69 to cysteine 177. Glutamate 186 is a Zn(2+) binding site. Cysteine 194 and cysteine 202 are oxidised to a cystine.

Belongs to the somatotropin/prolactin family.

It is found in the secreted. Its function is as follows. Growth hormone plays an important role in growth control and is involved in the regulation of several anabolic processes. Implicated as an osmoregulatory substance important for seawater adaptation. The protein is Somatotropin (gh) of Sparus aurata (Gilthead sea bream).